Consider the following 408-residue polypeptide: Menaquinone reductase (408 aa).

Residues 13–17 (GAGPA), 46–49 (CGDG), R103, A127, D290, and 302–303 (GI) contribute to the FAD site.

Belongs to the geranylgeranyl reductase family. The cofactor is FAD.

The enzyme catalyses menaquinone-9 + AH2 = beta-dihydromenaquinone-9 + A. It functions in the pathway quinol/quinone metabolism; menaquinone biosynthesis. Catalyzes the reduction of a single double bond in the isoprenoid tail of menaquinone (MK-9) in M.tuberculosis, likely the beta-isoprene unit, forming the predominant form of menaquinone found in mycobacteria, MK-9(II-H2). This is Menaquinone reductase from Mycobacterium tuberculosis (strain CDC 1551 / Oshkosh).